A 181-amino-acid polypeptide reads, in one-letter code: Large ribosomal subunit protein uL5 (181 aa).

The protein belongs to the universal ribosomal protein uL5 family. As to quaternary structure, part of the 50S ribosomal subunit; part of the 5S rRNA/L5/L18/L25 subcomplex. Contacts the 5S rRNA and the P site tRNA. Forms a bridge to the 30S subunit in the 70S ribosome.

Its function is as follows. This is one of the proteins that bind and probably mediate the attachment of the 5S RNA into the large ribosomal subunit, where it forms part of the central protuberance. In the 70S ribosome it contacts protein S13 of the 30S subunit (bridge B1b), connecting the 2 subunits; this bridge is implicated in subunit movement. Contacts the P site tRNA; the 5S rRNA and some of its associated proteins might help stabilize positioning of ribosome-bound tRNAs. This chain is Large ribosomal subunit protein uL5, found in Trichodesmium erythraeum (strain IMS101).